Consider the following 352-residue polypeptide: N-acetyl-gamma-glutamyl-phosphate reductase (352 aa).

Cys156 is a catalytic residue.

It belongs to the NAGSA dehydrogenase family. Type 1 subfamily.

Its subcellular location is the cytoplasm. The enzyme catalyses N-acetyl-L-glutamate 5-semialdehyde + phosphate + NADP(+) = N-acetyl-L-glutamyl 5-phosphate + NADPH + H(+). Its pathway is amino-acid biosynthesis; L-arginine biosynthesis; N(2)-acetyl-L-ornithine from L-glutamate: step 3/4. Catalyzes the NADPH-dependent reduction of N-acetyl-5-glutamyl phosphate to yield N-acetyl-L-glutamate 5-semialdehyde. The polypeptide is N-acetyl-gamma-glutamyl-phosphate reductase (Afipia carboxidovorans (strain ATCC 49405 / DSM 1227 / KCTC 32145 / OM5) (Oligotropha carboxidovorans)).